The primary structure comprises 128 residues: Iron-sulfur cluster insertion protein ErpA (128 aa).

Iron-sulfur cluster contacts are provided by Cys56, Cys120, and Cys122.

Belongs to the HesB/IscA family. Homodimer. The cofactor is iron-sulfur cluster.

Required for insertion of 4Fe-4S clusters for at least IspG. This Xanthomonas campestris pv. campestris (strain 8004) protein is Iron-sulfur cluster insertion protein ErpA.